A 184-amino-acid polypeptide reads, in one-letter code: tRNA (cytidine(56)-2'-O)-methyltransferase (184 aa).

S-adenosyl-L-methionine contacts are provided by residues L87, 112–116 (GAEKV), and 130–137 (VANQPHSE).

The protein belongs to the aTrm56 family. Homodimer.

It is found in the cytoplasm. The enzyme catalyses cytidine(56) in tRNA + S-adenosyl-L-methionine = 2'-O-methylcytidine(56) in tRNA + S-adenosyl-L-homocysteine + H(+). Specifically catalyzes the AdoMet-dependent 2'-O-ribose methylation of cytidine at position 56 in tRNAs. This is tRNA (cytidine(56)-2'-O)-methyltransferase from Methanocorpusculum labreanum (strain ATCC 43576 / DSM 4855 / Z).